Consider the following 216-residue polypeptide: SPbeta prophage-derived uncharacterized protein YomX (216 aa).

In Bacillus subtilis (strain 168), this protein is SPbeta prophage-derived uncharacterized protein YomX (yomX).